The primary structure comprises 309 residues: Ornithine carbamoyltransferase (309 aa).

Residues 56 to 59, Gln83, Arg107, and 134 to 137 each bind carbamoyl phosphate; these read STRT and HPCQ. L-ornithine is bound by residues Asn165, Asp223, and 227 to 228; that span reads SM. Carbamoyl phosphate is bound by residues 263-264 and Arg291; that span reads CL.

It belongs to the aspartate/ornithine carbamoyltransferase superfamily. OTCase family.

Its subcellular location is the cytoplasm. It carries out the reaction carbamoyl phosphate + L-ornithine = L-citrulline + phosphate + H(+). It participates in amino-acid biosynthesis; L-arginine biosynthesis; L-arginine from L-ornithine and carbamoyl phosphate: step 1/3. Functionally, reversibly catalyzes the transfer of the carbamoyl group from carbamoyl phosphate (CP) to the N(epsilon) atom of ornithine (ORN) to produce L-citrulline. In Burkholderia lata (strain ATCC 17760 / DSM 23089 / LMG 22485 / NCIMB 9086 / R18194 / 383), this protein is Ornithine carbamoyltransferase.